A 258-amino-acid chain; its full sequence is uncharacterized protein (258 aa).

The next 6 helical transmembrane spans lie at 21–41, 73–93, 119–139, 153–173, 182–202, and 229–249; these read LIWL…TIYY, LSQF…GSVA, WLIQ…LAYY, FAAS…AGLA, GAAA…VSLF, and FFGW…VFSV.

It is found in the cell membrane. This is an uncharacterized protein from Bacillus subtilis (strain 168).